The following is a 208-amino-acid chain: N-(5'-phosphoribosyl)anthranilate isomerase (208 aa).

Belongs to the TrpF family.

It carries out the reaction N-(5-phospho-beta-D-ribosyl)anthranilate = 1-(2-carboxyphenylamino)-1-deoxy-D-ribulose 5-phosphate. The protein operates within amino-acid biosynthesis; L-tryptophan biosynthesis; L-tryptophan from chorismate: step 3/5. In Chlamydia trachomatis serovar L2 (strain ATCC VR-902B / DSM 19102 / 434/Bu), this protein is N-(5'-phosphoribosyl)anthranilate isomerase.